The following is a 1828-amino-acid chain: Proteasome activator complex subunit 4 (1828 aa).

HEAT repeat units lie at residues 462 to 506 (PEGP…LVDC), 985 to 1024 (NFCC…NHGG), 1164 to 1202 (YVLP…QLKR), 1339 to 1377 (DAFL…GSKH), 1621 to 1659 (PVQV…YNLF), and 1665 to 1703 (EESV…CNFL). The bromodomain-like (BRDL) stretch occupies residues 1635 to 1723 (ARSSSWHARY…EALCKTRLPK (89 aa)).

Belongs to the BLM10 family. As to quaternary structure, homodimer. Interacts with the 20S and 26S proteasomes.

It is found in the cytoplasm. Its subcellular location is the cytosol. The protein localises to the nucleus. The protein resides in the nucleus speckle. Associated component of the proteasome that specifically recognizes acetylated histones and promotes ATP- and ubiquitin-independent degradation of core histones during DNA damage response. Recognizes and binds acetylated histones via its bromodomain-like (BRDL) region and activates the proteasome by opening the gated channel for substrate entry. Binds to the core proteasome via its C-terminus, which occupies the same binding sites as the proteasomal ATPases, opening the closed structure of the proteasome via an active gating mechanism. involved in DNA damage response in somatic cells: binds to acetylated histones and promotes degradation of histones. This chain is Proteasome activator complex subunit 4 (psme4), found in Xenopus laevis (African clawed frog).